The sequence spans 465 residues: Poly(A) polymerase I (465 aa).

Residues Asp80, Asp82, and Asp162 contribute to the active site. A disordered region spans residues 430–465; it reads APPEQKGMLNELDDDPAPRRRRSRPRKRAPRREGTV. Over residues 448 to 459 the composition is skewed to basic residues; sequence RRRRSRPRKRAP.

It belongs to the tRNA nucleotidyltransferase/poly(A) polymerase family.

It carries out the reaction RNA(n) + ATP = RNA(n)-3'-adenine ribonucleotide + diphosphate. Its function is as follows. Adds poly(A) tail to the 3' end of many RNAs, which usually targets these RNAs for decay. Plays a significant role in the global control of gene expression, through influencing the rate of transcript degradation, and in the general RNA quality control. The polypeptide is Poly(A) polymerase I (Salmonella typhi).